A 137-amino-acid chain; its full sequence is MMQPKKTKFRKAHKGRIHGVATSGATLSFGQFGLKAMAPERITARQIEAARRALTRHMKRAGRVWIRIFPDLPVSKKPAEVRMGSGKGTPELWVARVKPGRVIFEIDGVNVQVAKEALTLAAAKLPIKTRFVARIAE.

This sequence belongs to the universal ribosomal protein uL16 family. In terms of assembly, part of the 50S ribosomal subunit.

Binds 23S rRNA and is also seen to make contacts with the A and possibly P site tRNAs. The chain is Large ribosomal subunit protein uL16 from Rhodopseudomonas palustris (strain BisB18).